A 55-amino-acid polypeptide reads, in one-letter code: Accessory gland-specific peptide 70A (55 aa).

The N-terminal stretch at 1–19 is a signal peptide; that stretch reads MKTLSVFLVLVCLLGLVQS. Hydroxyproline occurs at positions 28, 32, 34, and 38. Cysteines 43 and 55 form a disulfide.

Main cells of the accessory glands of males (paragonial gland).

It is found in the secreted. Represses female sexual receptivity and stimulates oviposition. The protein is Accessory gland-specific peptide 70A (Acp70A) of Drosophila sechellia (Fruit fly).